Reading from the N-terminus, the 187-residue chain is Large ribosomal subunit protein uL5 (187 aa).

The protein belongs to the universal ribosomal protein uL5 family. As to quaternary structure, part of the 50S ribosomal subunit; part of the 5S rRNA/L5/L18/L25 subcomplex. Contacts the 5S rRNA and the P site tRNA. Forms a bridge to the 30S subunit in the 70S ribosome.

Its function is as follows. This is one of the proteins that bind and probably mediate the attachment of the 5S RNA into the large ribosomal subunit, where it forms part of the central protuberance. In the 70S ribosome it contacts protein S13 of the 30S subunit (bridge B1b), connecting the 2 subunits; this bridge is implicated in subunit movement. Contacts the P site tRNA; the 5S rRNA and some of its associated proteins might help stabilize positioning of ribosome-bound tRNAs. The sequence is that of Large ribosomal subunit protein uL5 from Mycolicibacterium paratuberculosis (strain ATCC BAA-968 / K-10) (Mycobacterium paratuberculosis).